Reading from the N-terminus, the 360-residue chain is Cyclin-Y-like protein 2 (360 aa).

Residues 204 to 286 form the Cyclin N-terminal domain; it reads RLTAEFAIVS…FLKLINYNIG (83 aa).

Belongs to the cyclin family. Cyclin Y subfamily.

The polypeptide is Cyclin-Y-like protein 2 (CCNYL2) (Macaca fascicularis (Crab-eating macaque)).